A 504-amino-acid polypeptide reads, in one-letter code: Flavin-dependent halogenase armH3 (504 aa).

FAD contacts are provided by Gly-16, Ala-19, Glu-49, and Ala-149. Residues Ser-329 and Gly-330 each contribute to the chloride site. Ile-331 is an FAD binding site. The tract at residues 444 to 475 (NNLRTPVDTGAADVKAKHAPSETDAQNPLQSM) is disordered.

The protein belongs to the flavin-dependent halogenase family.

It carries out the reaction melleolide F + FADH2 + chloride + O2 = 6'-chloromelleolide F + FAD + 2 H2O + H(+). Flavin-dependent halogenase involved in the biosynthesis of melleolides, a range of antifungal and phytotoxic polyketide derivatives composed of an orsellinic acid (OA) moiety esterified to various sesquiterpene alcohols. The halogenase catalyzes the transfer of a single chlorine atom to the melleolide backbone, resulting in a 6'-chloromelleolide product. The enzyme acts on free substrate and does not depend on carrier-protein-dependent acceptor molecules. This is Flavin-dependent halogenase armH3 from Armillaria mellea (Honey mushroom).